The following is a 1117-amino-acid chain: MKNINNKILKIFILFLAICSVKSDTCPTDSNWRPTPASSNSPVSPALPTTSLASDIVYGGNDLYYMAYWSMTDPNNLQPVSDVESEFSIALPAWAPDYFLIVAKQSAPALKANTNYQFSFDFKLGQVLTQGITYSNMTLSFYKPGDIDYLLWSYRAPMYSFTFTGDFSSTTYKSKTITFSVPVDLGLSTLILQVNRSRAMDYDDTTIFYKNMKITVPSKPVVAPPNLITKDSELINIPKASVSLDPQDLSTCPYLASDLVHWHNPSTWSNNLVPQPNENITIPAGKRVLISPCSISQTAIYQRIVIPATSELIFADSNLTMNVKDILVQGKFIMGTTKCRYNANINIIFHGSKTKVDTIAPFYGSKGIAVSAGGFISVHGKQYHNSWTKLASTVWSGDRIIYVQDNINWEVGQQVLITTSQFKDEIDNQNEVLTIKSILGKAIEFTTPIKFYHYGGKEYQAEVALLSRRIIFQGNDESDQDSFGGHVLVSGEGQFAGIQLKKMGQRNVKARYPLHFHLANVVQKSYISDCVVTKSYYRCYTIHGTNNLTLTRNVAFDVNGHCYYLEDGVEMDNTLSYNLAAFVHTIGEPAAGGAQTGETYYENENLTQPADSAAGGFYITNAYNTIIGNSASGGWAGFSFPNLEKPIGNHKNVEMEPQAFTTKVFEGNTAHSSGYQWISGSSIYVGGKLITDEVTGLLVYNTGRHSRPTCKDGIFSYDSSTYLWMRFNNTKVYLSNLGLGHWGDRVEVVGLEAYDSMRPASLFGAAWLSNAIVDGTGNILSKSQSYNRQGFQFYDTYVTTILSHITFRNFIQNPTSVYPDDDNVVIIALTFSDLYKPQFISSTINITLENILPAQIIGHKIVPDSGSSRFFNFIDWDGSLVGTHVPTIVGSHEKWWSYDDSKCTYNNDWTIWVCQKGSKSVGNIEFWVPNLIIRGEQNEGDSFVGSVSLFGDGITDVRKTAITRNAGITGITSTGWMLWLDGGSPTYLQVWAAQVAYQQYIFLAIPYPPGTTFTISTENKWAWQNAYGFNCTLASSAAEVRSSNGTKYYFDQTHLFVKIVNPVLTGSPAESFNRGGAKIDDVYWEYIYHINATNPNVSPNQDGFYTNLSYTLPSSTL.

Residues 1 to 23 (MKNINNKILKIFILFLAICSVKS) form the signal peptide. Asparagine 136, asparagine 195, asparagine 279, and asparagine 318 each carry an N-linked (GlcNAc...) asparagine glycan. Residues 266 to 392 (STWSNNLVPQ…YHNSWTKLAS (127 aa)) enclose the G8 domain. 2 PbH1 repeats span residues 522-544 (VQKS…TIHG) and 545-567 (TNNL…YLED). Residues asparagine 547 and asparagine 605 are each glycosylated (N-linked (GlcNAc...) asparagine). A PbH1 3 repeat occupies 621 to 642 (NAYNTIIGNSASGGWAGFSFPN). Residues asparagine 728, asparagine 845, asparagine 1030, asparagine 1044, asparagine 1091, and asparagine 1107 are each glycosylated (N-linked (GlcNAc...) asparagine).

It belongs to the comF family.

The protein resides in the secreted. The protein is Protein rliB (rliB) of Dictyostelium discoideum (Social amoeba).